A 338-amino-acid chain; its full sequence is Formamidase (338 aa).

Residues V15 to P257 enclose the CN hydrolase domain. E61 functions as the Proton acceptor in the catalytic mechanism. The Proton donor role is filled by K130. C163 (nucleophile) is an active-site residue.

The protein belongs to the carbon-nitrogen hydrolase superfamily. Aliphatic amidase family.

The enzyme catalyses formamide + H2O = formate + NH4(+). Its function is as follows. Is an aliphatic amidase with a restricted substrate specificity, as it only hydrolyzes formamide. The protein is Formamidase of Pseudomonas syringae pv. syringae (strain B728a).